A 205-amino-acid polypeptide reads, in one-letter code: GTP cyclohydrolase-2 (205 aa).

49–53 (RVHSE) contacts GTP. The Zn(2+) site is built by cysteine 54, cysteine 65, and cysteine 67. GTP contacts are provided by residues glutamine 70, 92–94 (EGR), and threonine 114. Catalysis depends on aspartate 126, which acts as the Proton acceptor. Arginine 128 serves as the catalytic Nucleophile. Threonine 149 and lysine 154 together coordinate GTP.

It belongs to the GTP cyclohydrolase II family. The cofactor is Zn(2+).

The catalysed reaction is GTP + 4 H2O = 2,5-diamino-6-hydroxy-4-(5-phosphoribosylamino)-pyrimidine + formate + 2 phosphate + 3 H(+). It functions in the pathway cofactor biosynthesis; riboflavin biosynthesis; 5-amino-6-(D-ribitylamino)uracil from GTP: step 1/4. Its function is as follows. Catalyzes the conversion of GTP to 2,5-diamino-6-ribosylamino-4(3H)-pyrimidinone 5'-phosphate (DARP), formate and pyrophosphate. This is GTP cyclohydrolase-2 from Pseudomonas syringae pv. tomato (strain ATCC BAA-871 / DC3000).